The sequence spans 283 residues: Plasma membrane ascorbate-dependent reductase CYBRD1 (283 aa).

The Cytoplasmic portion of the chain corresponds to 1–5 (MEGYK). Residues 6-30 (SFLVFLVSSLLLGFLGVIFTLVWVL) traverse the membrane as a helical segment. Residues 13–218 (SSLLLGFLGV…FGGLVVWMVT (206 aa)) enclose the Cytochrome b561 domain. At 31–45 (HWREGLGWDGGAAEF) the chain is on the extracellular side. The helical transmembrane segment at 46–67 (NWHPVLVTSGFIFIQGIAIIVY) threads the bilayer. Positions 48, 68, and 77 each coordinate heme b. The Cytoplasmic portion of the chain corresponds to 68–76 (RLPWTWNCS). L-ascorbate-binding residues include lysine 77 and lysine 81. Residues 77-103 (KLLMKFIHAGLHLTAFVFTIVALVAVF) traverse the membrane as a helical segment. Histidine 84 provides a ligand contact to heme b. At 104 to 116 (DFHNAKNIPNMYS) the chain is on the extracellular side. Fe(3+) is bound at residue histidine 106. Residues 113–116 (NMYS) and histidine 118 contribute to the heme b site. The helical transmembrane segment at 117–142 (LHSWIGLTVVILYALQLVLGVSIYLL) threads the bilayer. Topologically, residues 143–149 (PFARDTL) are cytoplasmic. Arginine 150 lines the L-ascorbate pocket. Residues 150-177 (RAALMPVHVYSGLLIFGTVIATALMGIT) form a helical membrane-spanning segment. Heme b contacts are provided by histidine 157 and glutamate 178. Residues 178–195 (EKLIFSLKEPPYSKMPPE) are Extracellular-facing. The chain crosses the membrane as a helical span at residues 196–220 (AIFVNTFGLIILVFGGLVVWMVTTP). Over 221–283 (AWKRPREQEI…LDDAGQRSTM (63 aa)) the chain is Cytoplasmic. Lysine 223 is a heme b binding site. The interval 234–263 (NPTVSSPDGTEEGSTITDCSNTEKSDVELN) is disordered. The span at 235-253 (PTVSSPDGTEEGSTITDCS) shows a compositional bias: polar residues. The span at 254 to 263 (NTEKSDVELN) shows a compositional bias: basic and acidic residues.

Homodimer. The cofactor is heme b.

It localises to the cell membrane. Its subcellular location is the apical cell membrane. It carries out the reaction Fe(3+)(out) + L-ascorbate(in) = monodehydro-L-ascorbate radical(in) + Fe(2+)(out) + H(+). It catalyses the reaction Cu(2+)(out) + L-ascorbate(in) = Cu(+)(out) + monodehydro-L-ascorbate radical(in) + H(+). The catalysed reaction is monodehydro-L-ascorbate radical(out) + L-ascorbate(in) = monodehydro-L-ascorbate radical(in) + L-ascorbate(out). Its function is as follows. Plasma membrane reductase that uses cytoplasmic ascorbate as an electron donor to reduce extracellular Fe(3+) into Fe(2+). It is also able to reduce extracellular monodehydro-L-ascorbate and may be involved in extracellular ascorbate regeneration. May also function as a cupric transmembrane reductase. In Xenopus tropicalis (Western clawed frog), this protein is Plasma membrane ascorbate-dependent reductase CYBRD1 (cybrd1).